The chain runs to 574 residues: Isocitrate dehydrogenase kinase/phosphatase (574 aa).

Residues 315 to 321 and K336 each bind ATP; that span reads APGIRGM. Residue D371 is part of the active site.

Belongs to the AceK family.

It localises to the cytoplasm. The enzyme catalyses L-seryl-[isocitrate dehydrogenase] + ATP = O-phospho-L-seryl-[isocitrate dehydrogenase] + ADP + H(+). Its function is as follows. Bifunctional enzyme which can phosphorylate or dephosphorylate isocitrate dehydrogenase (IDH) on a specific serine residue. This is a regulatory mechanism which enables bacteria to bypass the Krebs cycle via the glyoxylate shunt in response to the source of carbon. When bacteria are grown on glucose, IDH is fully active and unphosphorylated, but when grown on acetate or ethanol, the activity of IDH declines drastically concomitant with its phosphorylation. This chain is Isocitrate dehydrogenase kinase/phosphatase, found in Escherichia coli O127:H6 (strain E2348/69 / EPEC).